We begin with the raw amino-acid sequence, 142 residues long: Lysozyme 2 (142 aa).

The N-terminal stretch at 1–20 (MLKLTLTILAAVLLVTPAFG) is a signal peptide. The 122-residue stretch at 21–142 (KVYTRCSLAR…HTLPSIDDCF (122 aa)) folds into the C-type lysozyme domain. Disulfide bonds link C26/C141, C47/C131, C82/C98, and C94/C112. Residue E52 is part of the active site. An N-linked (GlcNAc...) asparagine glycan is attached at N66. Residue D70 is part of the active site.

Belongs to the glycosyl hydrolase 22 family. As to expression, expressed only in the midgut where it is concentrated around the middle in all larval stages.

It is found in the secreted. It carries out the reaction Hydrolysis of (1-&gt;4)-beta-linkages between N-acetylmuramic acid and N-acetyl-D-glucosamine residues in a peptidoglycan and between N-acetyl-D-glucosamine residues in chitodextrins.. Its function is as follows. Lysozymes have primarily a bacteriolytic function. Shows antibacterial activity against Gram-positive bacterium M.luteus but shows no activity against Gram-negative bacterium E.coli. Likely to play a role in the eradication of ingested pathogens during their passage through the intestine. In Lucilia sericata (Green bottle fly), this protein is Lysozyme 2.